A 526-amino-acid chain; its full sequence is Na(+)/H(+) antiporter NhaB (526 aa).

The next 10 membrane-spanning stretches (helical) occupy residues 13 to 33, 98 to 118, 133 to 155, 208 to 228, 244 to 264, 309 to 329, 355 to 375, 395 to 415, 452 to 472, and 481 to 501; these read FLGQSPDWYKLAILVFLVVNP, LLLIFMVAGIYFMKQLLLFVF, LAFCFAAALLSAFLDALTVVAVV, LLMHAGVGTALGGVMTMVGEP, FFLRMAPVTLPVFACGLLVCL, ALIGIWLVVALAFHLAEVGLI, EALPFTALLTVFFTVVAVIIE, LALFYLFNGLLSSVSDNVFVG, VATPNGQAAFLFLLTSALAPL, and VWMALPYTVVLTLVGLLCVQF.

The protein belongs to the NhaB Na(+)/H(+) (TC 2.A.34) antiporter family.

The protein resides in the cell inner membrane. The enzyme catalyses 2 Na(+)(in) + 3 H(+)(out) = 2 Na(+)(out) + 3 H(+)(in). Functionally, na(+)/H(+) antiporter that extrudes sodium in exchange for external protons. The chain is Na(+)/H(+) antiporter NhaB from Serratia proteamaculans (strain 568).